The following is a 440-amino-acid chain: Deoxyguanosinetriphosphate triphosphohydrolase-like protein (440 aa).

Positions 61 to 256 (RLIHSLEVSC…MEAADDLCYS (196 aa)) constitute an HD domain.

Belongs to the dGTPase family. Type 3 subfamily.

The protein is Deoxyguanosinetriphosphate triphosphohydrolase-like protein of Synechocystis sp. (strain ATCC 27184 / PCC 6803 / Kazusa).